Consider the following 391-residue polypeptide: MAGRSLCLTRSSVPGTPFPPPVQQPSTPGPDLLALEEEYKRLNAELQAKTADVVQQAKEIIRDRQEVRSRPVSTQMKSCDDEDDYSLRGLLPSEGIVHLHSETKPKTKNIDPVNKVQNKLHSANKGRKTNSSVKLKYSDVQTADDVAIPEDFSDFSLAKTISKIEGQLEEEGLPEYIDDIFSGVSNDIGTEAQIRFLKAKLHVMQEELDNVVCECNKKEDEIQNLKSQVKNFEEDFMRQQRTINMQQSQVEKYKTLFEEANKKYDGLQQQLSSVERELENKRRLQKQAASSQSATEVRLNRALEEAEKYKLELSKLRQNNKDIANEEHKKIEVLKSENKKLEKQKGELMIGFKKQLKLIDVLKRQKMHIEAAKMLSFTEEEFMKALEWGNS.

2 disordered regions span residues 1 to 31 (MAGRSLCLTRSSVPGTPFPPPVQQPSTPGPD) and 65 to 85 (QEVRSRPVSTQMKSCDDEDDY). Residues 188–351 (IGTEAQIRFL…EKQKGELMIG (164 aa)) adopt a coiled-coil conformation.

The protein localises to the cytoplasm. It is found in the cytoskeleton. Its subcellular location is the microtubule organizing center. The protein resides in the centrosome. It localises to the centriolar satellite. The sequence is that of Testis-expressed protein 9 (TEX9) from Homo sapiens (Human).